The sequence spans 422 residues: UDP-N-acetylglucosamine 1-carboxyvinyltransferase (422 aa).

Residue 22 to 23 (KN) participates in phosphoenolpyruvate binding. Position 93 (Arg93) interacts with UDP-N-acetyl-alpha-D-glucosamine. The active-site Proton donor is Cys117. Position 117 is a 2-(S-cysteinyl)pyruvic acid O-phosphothioketal (Cys117). UDP-N-acetyl-alpha-D-glucosamine contacts are provided by residues 122–126 (RPVDL), Asp308, and Ile330.

Belongs to the EPSP synthase family. MurA subfamily.

The protein resides in the cytoplasm. It carries out the reaction phosphoenolpyruvate + UDP-N-acetyl-alpha-D-glucosamine = UDP-N-acetyl-3-O-(1-carboxyvinyl)-alpha-D-glucosamine + phosphate. It participates in cell wall biogenesis; peptidoglycan biosynthesis. Cell wall formation. Adds enolpyruvyl to UDP-N-acetylglucosamine. The protein is UDP-N-acetylglucosamine 1-carboxyvinyltransferase of Legionella pneumophila (strain Paris).